Here is a 38-residue protein sequence, read N- to C-terminus: Photosystem II reaction center protein L (38 aa).

The helical transmembrane segment at 17–37 (GLYWGLLLIFVLAVLFSSYFF) threads the bilayer.

It belongs to the PsbL family. As to quaternary structure, PSII is composed of 1 copy each of membrane proteins PsbA, PsbB, PsbC, PsbD, PsbE, PsbF, PsbH, PsbI, PsbJ, PsbK, PsbL, PsbM, PsbT, PsbX, PsbY, PsbZ, Psb30/Ycf12, at least 3 peripheral proteins of the oxygen-evolving complex and a large number of cofactors. It forms dimeric complexes.

The protein resides in the plastid. It is found in the chloroplast thylakoid membrane. One of the components of the core complex of photosystem II (PSII). PSII is a light-driven water:plastoquinone oxidoreductase that uses light energy to abstract electrons from H(2)O, generating O(2) and a proton gradient subsequently used for ATP formation. It consists of a core antenna complex that captures photons, and an electron transfer chain that converts photonic excitation into a charge separation. This subunit is found at the monomer-monomer interface and is required for correct PSII assembly and/or dimerization. In Staurastrum punctulatum (Green alga), this protein is Photosystem II reaction center protein L.